Here is a 395-residue protein sequence, read N- to C-terminus: MPVEKDLKTAYKALYDEKEPLKALHLYDEILKGSPTNLTALIFKAACLEKLYFGFSDWHSDATMENAKELLDKALMTAEGRGDRSKIGLVNFRYFVHFFNIKDYELAQSYFKKAKNLGYVDDTLPLWEDRLETKLNKKNKKQKDSTNKHTIKPVESIENRGDNNSSHSPISPLKIETAPQESPKFKIDWYQSSTSVTISLFTVNLPESKEQVNIYISPNDRRTLSISYQVPKSGSEFQYNAKLSHEVDPKAVSLKIFPKKLEITLSKIDSTQWKKLEEDILTESSRLSDEGKNSDSATRLLSAETASKERLSYPSSSKKKIDWSKLDIDEEADEEAGSADSFFQKLYAGADPDTKRAMMKSFIESNGTALSTDWEDVSKGTVKTSPPEGMEPKHW.

K32 is covalently cross-linked (Glycyl lysine isopeptide (Lys-Gly) (interchain with G-Cter in ubiquitin)). The disordered stretch occupies residues 137 to 175 (KKNKKQKDSTNKHTIKPVESIENRGDNNSSHSPISPLKI). Phosphoserine occurs at positions 168 and 171. Residues 182–277 (SPKFKIDWYQ…IDSTQWKKLE (96 aa)) form the CS domain. The SGS domain maps to 312–395 (SYPSSSKKKI…PPEGMEPKHW (84 aa)). The tract at residues 373-395 (DWEDVSKGTVKTSPPEGMEPKHW) is disordered.

This sequence belongs to the SGT1 family. Interacts with SKP1/CBF3D. Part of SCF E3 ubiquitin ligase complexes containing SKP1, CDC53, HRT1 and some F-box proteins. Interacts with CIR1/CDC35.

Involved in ubiquitination and subsequent proteasomal degradation of target proteins. Required for both entry into S phase and kinetochore function. Also involved in cyclic AMP (cAMP) pathway, possibly by participating in the assembly or the conformational activation of specific multiprotein complexes. The protein is Protein SGT1 of Saccharomyces cerevisiae (strain ATCC 204508 / S288c) (Baker's yeast).